The sequence spans 278 residues: Complement component 1 Q subcomponent-binding protein, mitochondrial (278 aa).

The N-terminal 70 residues, 1–70 (MFQLLRCVPR…PCACGCGCSG (70 aa)), are a transit peptide targeting the mitochondrion. Positions 73 to 90 (TEGDKAFVDFLSDEIKEE) are C1q binding. Position 84 is a phosphoserine (serine 84). Lysine 88 and lysine 91 each carry N6-acetyllysine. Residues 136 to 164 (IPPAFGGEEEEPSQGQKAEEQEPELTSTP) are disordered. The interval 166 to 209 (FVVEVTKDGSSKALVLDCHYPEDEIGQEDDQSDIFSIKEVSFQA) is interaction with MAVS. Tyrosine 185 carries the post-translational modification Phosphotyrosine. A phosphoserine mark is found at serine 197 and serine 201. At threonine 210 the chain carries Phosphothreonine.

It belongs to the MAM33 family. As to quaternary structure, homotrimer; three monomers form a donut-shaped structure with an unusually asymmetric charge distribution on the surface. Interacts with CDK13, HRK, VTN, NFYB, ADRA1B, FOXC1, DDX21, DDX50, NCL, SRSF1 and SRSF9. Interacts with CD93; the association may represent a cell surface C1q receptor. Interacts with KRT1; the association represents a cell surface kininogen receptor. Interacts with CD209; the interaction is indicative for a C1q:C1QBP:CD209 signaling complex. Interacts with FBL and RRP1; the respective interactions with C1QBP are competitive. Probably associates with the mitoribosome. Interacts with MAVS; the interaction occurs upon viral transfection. Interacts with PPIF. Interacts with U2AF1L4. Interacts with PLEKHN1. Interacts with VGF-derived peptide TLQP-21. Interacts with MRE11 and RAD50; forming the MRC (MRE11-RAD50-C1QBP) complex that inhibits the activity of MRE11.

The protein localises to the mitochondrion matrix. It localises to the nucleus. The protein resides in the cell membrane. Its subcellular location is the secreted. It is found in the cytoplasm. The protein localises to the nucleolus. Multifunctional and multicompartmental protein involved in inflammation and infection processes, ribosome biogenesis, protein synthesis in mitochondria, regulation of apoptosis, transcriptional regulation and pre-mRNA splicing. At the cell surface is thought to act as an endothelial receptor for plasma proteins of the complement and kallikrein-kinin cascades. Putative receptor for C1q; specifically binds to the globular 'heads' of C1q thus inhibiting C1; may perform the receptor function through a complex with C1qR/CD93. In complex with cytokeratin-1/KRT1 is a high affinity receptor for kininogen-1/HMWK. Can also bind other plasma proteins, such as coagulation factor XII leading to its autoactivation. May function to bind initially fluid kininogen-1 to the cell membrane. The secreted form may enhance both extrinsic and intrinsic coagulation pathways. It is postulated that the cell surface form requires docking with transmembrane proteins for downstream signaling which might be specific for a cell-type or response. By acting as C1q receptor is involved in chemotaxis of immature dendritic cells and neutrophils and is proposed to signal through CD209/DC-SIGN on immature dendritic cells, through integrin alpha-4/beta-1 during trophoblast invasion of the decidua, and through integrin beta-1 during endothelial cell adhesion and spreading. Signaling involved in inhibition of innate immune response is implicating the PI3K-AKT/PKB pathway. Required for protein synthesis in mitochondria. In mitochondrial translation may be involved in formation of functional 55S mitoribosomes; the function seems to involve its RNA-binding activity. Acts as a RNA modification reader, which specifically recognizes and binds mitochondrial RNAs modified by C5-methylcytosine (m5C) in response to stress, and promotes recruitment of the mitochondrial degradosome complex, leading to their degradation. May be involved in the nucleolar ribosome maturation process; the function may involve the exchange of FBL for RRP1 in the association with pre-ribosome particles. Involved in regulation of RNA splicing by inhibiting the RNA-binding capacity of SRSF1 and its phosphorylation. Is required for the nuclear translocation of splicing factor U2AF1L4. Involved in regulation of CDKN2A- and HRK-mediated apoptosis. Stabilizes mitochondrial CDKN2A isoform smARF. May be involved in regulation of FOXC1 transcriptional activity and NFY/CCAAT-binding factor complex-mediated transcription. May play a role in antibacterial defense as it can bind to cell surface hyaluronan and inhibit Streptococcus pneumoniae hyaluronate lyase. May be involved in modulation of the immune response; ligation by HCV core protein is resulting in suppression of interleukin-12 production in monocyte-derived dendritic cells. Involved in regulation of antiviral response by inhibiting RIGI- and IFIH1-mediated signaling pathways probably involving its association with MAVS after viral infection. Acts as a regulator of DNA repair via homologous recombination by inhibiting the activity of MRE11: interacts with unphosphorylated MRE11 and RAD50 in absence of DNA damage, preventing formation and activity of the MRN complex. Following DNA damage, dissociates from phosphorylated MRE11, allowing formation of the MRN complex. This is Complement component 1 Q subcomponent-binding protein, mitochondrial (C1QBP) from Bos taurus (Bovine).